The sequence spans 481 residues: Sucrose phosphorylase (481 aa).

Sucrose contacts are provided by residues aspartate 49, histidine 87, 191 to 193, glutamate 234, 291 to 292, 335 to 338, and arginine 392; these read RLD, HD, and DIYQ. Aspartate 193 functions as the Nucleophile in the catalytic mechanism. The active-site Proton donor is glutamate 234.

It belongs to the glycosyl hydrolase 13 family. Sucrose phosphorylase subfamily.

The protein localises to the cytoplasm. The catalysed reaction is sucrose + phosphate = D-fructose + alpha-D-glucose 1-phosphate. Its function is as follows. Intracellular catabolism of sucrose. Being intracellular, probably not involved in synthesis of extracellular polysaccharides. This Streptococcus mutans serotype c (strain ATCC 700610 / UA159) protein is Sucrose phosphorylase.